A 580-amino-acid chain; its full sequence is Arginine--tRNA ligase (580 aa).

The 'HIGH' region motif lies at 123-133 (PNIAKEMHVGH).

Belongs to the class-I aminoacyl-tRNA synthetase family. As to quaternary structure, monomer.

The protein resides in the cytoplasm. The catalysed reaction is tRNA(Arg) + L-arginine + ATP = L-arginyl-tRNA(Arg) + AMP + diphosphate. The chain is Arginine--tRNA ligase (argS) from Buchnera aphidicola subsp. Schizaphis graminum (strain Sg).